Reading from the N-terminus, the 575-residue chain is Protein NRD1 (575 aa).

In terms of domain architecture, CID spans 1–153 (MQQDDDFQNF…AIRSKCFAMD (153 aa)). The disordered stretch occupies residues 225–282 (SHTSVGTVAPPQAHTITEYGSRRERERERERYNSRRNRSRSPPAPFSQPSTGRKDRYP). The span at 244 to 257 (GSRRERERERERYN) shows a compositional bias: basic and acidic residues. Serine 263, serine 265, and serine 271 each carry phosphoserine. Positions 339 to 409 (RTLFIGGVPL…LPLRTRWGVG (71 aa)) constitute an RRM domain. A disordered region spans residues 468 to 575 (VSSKAISQKM…NQQQQQQQQS (108 aa)). Polar residues-rich tracts occupy residues 471–482 (KAISQKMPTDSG) and 491–501 (PNKSGSISSIS). Composition is skewed to low complexity over residues 517–527 (QYVQPMMQQPY) and 549–575 (QQQF…QQQS).

It is found in the nucleus. Functionally, plays a role in sequence-specific regulation of nuclear pre-mRNA abundance. The protein is Protein NRD1 (NRD1) of Saccharomyces cerevisiae (strain ATCC 204508 / S288c) (Baker's yeast).